The primary structure comprises 369 residues: Large ribosomal subunit protein uL4 (369 aa).

Thr-2 bears the N-acetylthreonine mark.

The protein belongs to the universal ribosomal protein uL4 family.

The polypeptide is Large ribosomal subunit protein uL4 (rpl4) (Dictyostelium discoideum (Social amoeba)).